The primary structure comprises 313 residues: Adhesin MafA 2/3 (313 aa).

The signal sequence occupies residues 1 to 14 (MKTLLLLIPLVLTA). The N-palmitoyl cysteine moiety is linked to residue C15. A lipid anchor (S-diacylglycerol cysteine) is attached at C15. Over residues 282–298 (GDTTAQNRPDFKQNNGK) the composition is skewed to polar residues. The tract at residues 282-313 (GDTTAQNRPDFKQNNGKNPDVGNEVIRRRKGG) is disordered.

This sequence belongs to the MafA family.

The protein localises to the cell outer membrane. The polypeptide is Adhesin MafA 2/3 (mafA2) (Neisseria gonorrhoeae (strain ATCC 700825 / FA 1090)).